The sequence spans 229 residues: Large ribosomal subunit protein uL1 (229 aa).

The protein belongs to the universal ribosomal protein uL1 family. As to quaternary structure, part of the 50S ribosomal subunit.

Functionally, binds directly to 23S rRNA. The L1 stalk is quite mobile in the ribosome, and is involved in E site tRNA release. In terms of biological role, protein L1 is also a translational repressor protein, it controls the translation of the L11 operon by binding to its mRNA. This Pediococcus pentosaceus (strain ATCC 25745 / CCUG 21536 / LMG 10740 / 183-1w) protein is Large ribosomal subunit protein uL1.